Here is a 116-residue protein sequence, read N- to C-terminus: MTEQAEDALPISFTDAAALKVKTLLDEEENDALKLRVYVTGGGCSGFQYGFTFDEKVNEGDFTVEKQGVQLVVDPMSLQYLVGGEVDYTSGLEGSRFFVKNPNATTTCGCGASFSV.

Positions 44, 108, and 110 each coordinate iron-sulfur cluster.

This sequence belongs to the HesB/IscA family. As to quaternary structure, homodimer. Requires iron-sulfur cluster as cofactor.

Required for insertion of 4Fe-4S clusters for at least IspG. The chain is Iron-sulfur cluster insertion protein ErpA from Shewanella piezotolerans (strain WP3 / JCM 13877).